A 117-amino-acid polypeptide reads, in one-letter code: Putative cysteine proteinase inhibitor 7 (117 aa).

Positions 1–24 (MTMRTSSLLLAAVAVVAIVAGATA) are cleaved as a signal peptide. A Cystatin domain is found at 28-84 (GSWEPVDINDPHVQELGRWAVAEEDRGVAAGGLTFERVTDGEKQVVAGVNYRLTLEA). The Secondary area of contact motif lies at 71–75 (QVVAG).

Belongs to the cystatin family. Phytocystatin subfamily.

The protein localises to the secreted. Specific inhibitor of cysteine proteinases. Probably involved in the regulation of endogenous processes and in defense against pests and pathogens. This is Putative cysteine proteinase inhibitor 7 from Oryza sativa subsp. japonica (Rice).